The chain runs to 151 residues: Large ribosomal subunit protein uL22 (151 aa).

Positions 1-18 are enriched in polar residues; that stretch reads MARINYSINGDPETTSKA. Residues 1–23 form a disordered region; sequence MARINYSINGDPETTSKAMGSEL.

The protein belongs to the universal ribosomal protein uL22 family. As to quaternary structure, part of the 50S ribosomal subunit.

Functionally, this protein binds specifically to 23S rRNA. It makes multiple contacts with different domains of the 23S rRNA in the assembled 50S subunit and ribosome. The globular domain of the protein is located near the polypeptide exit tunnel on the outside of the subunit, while an extended beta-hairpin is found that lines the wall of the exit tunnel in the center of the 70S ribosome. This Methanosarcina acetivorans (strain ATCC 35395 / DSM 2834 / JCM 12185 / C2A) protein is Large ribosomal subunit protein uL22.